A 530-amino-acid polypeptide reads, in one-letter code: Formate--tetrahydrofolate ligase (530 aa).

46–53 (TPEGEGKT) provides a ligand contact to ATP.

Belongs to the formate--tetrahydrofolate ligase family.

The enzyme catalyses (6S)-5,6,7,8-tetrahydrofolate + formate + ATP = (6R)-10-formyltetrahydrofolate + ADP + phosphate. It participates in one-carbon metabolism; tetrahydrofolate interconversion. This is Formate--tetrahydrofolate ligase from Malacoplasma penetrans (strain HF-2) (Mycoplasma penetrans).